The primary structure comprises 195 residues: ATP-dependent Clp protease proteolytic subunit (195 aa).

Ser-98 (nucleophile) is an active-site residue. The active site involves His-123.

Belongs to the peptidase S14 family. As to quaternary structure, fourteen ClpP subunits assemble into 2 heptameric rings which stack back to back to give a disk-like structure with a central cavity, resembling the structure of eukaryotic proteasomes.

It localises to the cytoplasm. It carries out the reaction Hydrolysis of proteins to small peptides in the presence of ATP and magnesium. alpha-casein is the usual test substrate. In the absence of ATP, only oligopeptides shorter than five residues are hydrolyzed (such as succinyl-Leu-Tyr-|-NHMec, and Leu-Tyr-Leu-|-Tyr-Trp, in which cleavage of the -Tyr-|-Leu- and -Tyr-|-Trp bonds also occurs).. Cleaves peptides in various proteins in a process that requires ATP hydrolysis. Has a chymotrypsin-like activity. Plays a major role in the degradation of misfolded proteins. This Helicobacter pylori (strain Shi470) protein is ATP-dependent Clp protease proteolytic subunit.